A 233-amino-acid chain; its full sequence is MLCSIEKIEPLTSFIFRVLLKPDQPFEFRAGQYINVSLSFGSLPFSIASCPSNGAFLELHIGGSDISKKNTLVMEELTNSWGCGNMVEVSEARGKAWLRDESVKPLLLVAGGTGMSYTLSILKNSLAQGFNQPIYVYWGAKDMENLYVHDELVDIALENKNVSYVPVTEISTCPQYAKQGKVLECVMSDFRNLSEFDIYLCGPYKMVEVARDWFCDKRGAEPEQLYADAFAYL.

The FAD-binding FR-type domain maps to 1–133 (MLCSIEKIEP…NSLAQGFNQP (133 aa)). Pyridine is bound at residue 111–115 (GGTGM).

It belongs to the Fre/LuxG FAD/NAD(P) flavoprotein oxidoreductase family.

Its function is as follows. Probable flavin reductase in the luminescent systems of different marine bacteria. The sequence is that of Probable flavin reductase (luxG) from Vibrio harveyi (Beneckea harveyi).